We begin with the raw amino-acid sequence, 179 residues long: Large ribosomal subunit protein uL10 (179 aa).

Belongs to the universal ribosomal protein uL10 family. Part of the ribosomal stalk of the 50S ribosomal subunit. The N-terminus interacts with L11 and the large rRNA to form the base of the stalk. The C-terminus forms an elongated spine to which L12 dimers bind in a sequential fashion forming a multimeric L10(L12)X complex.

Its function is as follows. Forms part of the ribosomal stalk, playing a central role in the interaction of the ribosome with GTP-bound translation factors. This Mycolicibacterium vanbaalenii (strain DSM 7251 / JCM 13017 / BCRC 16820 / KCTC 9966 / NRRL B-24157 / PYR-1) (Mycobacterium vanbaalenii) protein is Large ribosomal subunit protein uL10.